We begin with the raw amino-acid sequence, 1475 residues long: Protein STU1 (1475 aa).

Disordered regions lie at residues 870-913 and 1113-1134; these read REST…EPDL and DGESIEDTSGNTSHGTDENRPA. Over residues 887-896 the composition is skewed to basic and acidic residues; sequence DGAHGGDARD.

The protein belongs to the CLASP family. Interacts with microtubules.

The protein localises to the cytoplasm. It localises to the cytoskeleton. The protein resides in the nucleus. It is found in the spindle. In terms of biological role, microtubule binding protein that promotes the stabilization of dynamic microtubules. Required for mitotic spindle formation. This Eremothecium gossypii (strain ATCC 10895 / CBS 109.51 / FGSC 9923 / NRRL Y-1056) (Yeast) protein is Protein STU1 (STU1).